Here is a 141-residue protein sequence, read N- to C-terminus: Large ribosomal subunit protein bL17 (141 aa).

This sequence belongs to the bacterial ribosomal protein bL17 family. Part of the 50S ribosomal subunit. Contacts protein L32.

The chain is Large ribosomal subunit protein bL17 from Chlamydia trachomatis serovar D (strain ATCC VR-885 / DSM 19411 / UW-3/Cx).